The primary structure comprises 448 residues: Ribulose bisphosphate carboxylase large chain (448 aa).

Lys4 carries the post-translational modification N6,N6,N6-trimethyllysine. Residues Asn113 and Thr163 each coordinate substrate. The active-site Proton acceptor is Lys165. Lys167 contributes to the substrate binding site. Mg(2+) contacts are provided by Lys191, Asp193, and Glu194. Residue Lys191 is modified to N6-carboxylysine. His284 functions as the Proton acceptor in the catalytic mechanism. Residues Arg285, His317, and Ser369 each coordinate substrate.

The protein belongs to the RuBisCO large chain family. Type I subfamily. As to quaternary structure, heterohexadecamer of 8 large chains and 8 small chains; disulfide-linked. The disulfide link is formed within the large subunit homodimers. Mg(2+) is required as a cofactor. The disulfide bond which can form in the large chain dimeric partners within the hexadecamer appears to be associated with oxidative stress and protein turnover.

It localises to the plastid. It is found in the chloroplast. It catalyses the reaction 2 (2R)-3-phosphoglycerate + 2 H(+) = D-ribulose 1,5-bisphosphate + CO2 + H2O. The enzyme catalyses D-ribulose 1,5-bisphosphate + O2 = 2-phosphoglycolate + (2R)-3-phosphoglycerate + 2 H(+). Its function is as follows. RuBisCO catalyzes two reactions: the carboxylation of D-ribulose 1,5-bisphosphate, the primary event in carbon dioxide fixation, as well as the oxidative fragmentation of the pentose substrate in the photorespiration process. Both reactions occur simultaneously and in competition at the same active site. In Eucryphia lucida (Leatherwood), this protein is Ribulose bisphosphate carboxylase large chain.